The chain runs to 170 residues: dCTP pyrophosphatase 1 (170 aa).

A disordered region spans residues 1-25 (MSQAGTGVCGNGGQEDSAAAGPFSF). At S2 the chain carries N-acetylserine. At S2 the chain carries Phosphoserine. Substrate is bound by residues H38 and 47 to 51 (WEQFH). Mg(2+) is bound by residues E63 and E66. W73 contacts substrate. The Mg(2+) site is built by E95 and D98. Residue Y102 coordinates substrate. Residues 149–170 (LSENEAVGSGDPASELGNQAST) form a disordered region.

As to quaternary structure, homotetramer. Mg(2+) is required as a cofactor.

It localises to the cytoplasm. The protein localises to the cytosol. It carries out the reaction dCTP + H2O = dCMP + diphosphate + H(+). Functionally, hydrolyzes deoxynucleoside triphosphates (dNTPs) to the corresponding nucleoside monophosphates. Has a strong preference for dCTP and its analogs including 5-iodo-dCTP and 5-methyl-dCTP for which it may even have a higher efficiency. May protect DNA or RNA against the incorporation of these genotoxic nucleotide analogs through their catabolism. The protein is dCTP pyrophosphatase 1 of Rattus norvegicus (Rat).